Consider the following 480-residue polypeptide: tRNA-2-methylthio-N(6)-dimethylallyladenosine synthase (480 aa).

Positions 43-161 (KLYCLNTFGC…FPELLYSAMD (119 aa)) constitute an MTTase N-terminal domain. Residues cysteine 52, cysteine 88, cysteine 122, cysteine 198, cysteine 202, and cysteine 205 each coordinate [4Fe-4S] cluster. The Radical SAM core domain maps to 184 to 414 (RKDGVKAWVT…LETQNRISKE (231 aa)). Residues 417-480 (DTFLGKVVEV…TWSLEGSIVR (64 aa)) form the TRAM domain.

It belongs to the methylthiotransferase family. MiaB subfamily. As to quaternary structure, monomer. [4Fe-4S] cluster is required as a cofactor.

It localises to the cytoplasm. The catalysed reaction is N(6)-dimethylallyladenosine(37) in tRNA + (sulfur carrier)-SH + AH2 + 2 S-adenosyl-L-methionine = 2-methylsulfanyl-N(6)-dimethylallyladenosine(37) in tRNA + (sulfur carrier)-H + 5'-deoxyadenosine + L-methionine + A + S-adenosyl-L-homocysteine + 2 H(+). Functionally, catalyzes the methylthiolation of N6-(dimethylallyl)adenosine (i(6)A), leading to the formation of 2-methylthio-N6-(dimethylallyl)adenosine (ms(2)i(6)A) at position 37 in tRNAs that read codons beginning with uridine. This is tRNA-2-methylthio-N(6)-dimethylallyladenosine synthase from Acetivibrio thermocellus (strain ATCC 27405 / DSM 1237 / JCM 9322 / NBRC 103400 / NCIMB 10682 / NRRL B-4536 / VPI 7372) (Clostridium thermocellum).